The chain runs to 1859 residues: MILKSFLLGNLLSLCMKIINSVVVVGLYYGFLTTFSIGPSYLFLLRARVMEEGTEKKVSATTGFITGQLMMFISIYYAPLHLALGRPHTITVLALPYLLFHFFWNNHKHFFDYGSTTRNSMRNLSIQCVFLNNLIFQLFNHFILPSSTLARLVNIYMFRCNNKMLFVTSSFVGWLIGHILFMKWVGLVLFWIRQNHSIKSNVLIRSNKYLVSELRNSMARIFSILLFITCVYYLGRMPAPIVTKKLKETSKTEERGESEEERDVEIETTSETKGTKQEQERSTEEDPSPSLCSEEKEDPDKIDETEEIRVNGKEKTKDEFKETCYKSRPVYENYYLNGNQENSKLEILKDKEDKDLFWFEKPLVTLLFDYKRWNRPLRYIKNDRFENAVRNEMSQYLFYTCKNDGKQRISFTYPPSLSTFLEMIQRKIYLCTKEKLSSEEMYNHWIYTNEQKKNNLRNEFINRIEALDKEFVSLNVLEKITRLCNDETEQECSPKVYDPLLNGPYRGTITNLYSSSIMNETLIEDSIETLCLCINKIHGILLTDYREFEHKINKFDRKSLSRDIGHLSTSIIEFDGESIPSFNFKALSLLTEDGRIDSEDQAKFSKFLVKEISKRVPRWSYKLIDTLEQEERENEEEVAEDHEIRSRKAKRVVIFNDNGQNTDTHTNTSNDDQGNEVALIRYSQQSDFRRDIIKGSMRAQRRKIVTWKLFQANVHSPLFLDRIDKTFFFSFDISGMMKIIFRNWMVKNTELKISDYEEEEKNKKETEKKNEKKREEKTRILIAETWDSILCAQVIRGSMLVIQSIIRKYIVLPSLIIAKNISRMLLFQFPEWSEDLKDWSREIHVKCTYNGVQLSETEFPKNWLIDGIQIKILFPFCLKPWHRSKLGSHHRDPMKNKRKKNDFCFLTVWGMEAELPFGSPRKRLSFFEPICKELEKKIRKVKKNYFIVLKILKERTKLFIKVSKEKKGWVIKRVLFIKRIIKELNKILFGLREVYDSSENKNRKDYIISNQMIHESSIRIRSMDWTNSLLTEKKMKDLTDRTNTIRKKIERIKRDKKKTFLTSEIKISPNERSCDNKKLESPKNIWQILKRRNTRLIRKWNYFIKFLIERIYIDALPYIINIPRIHGRLFLESKKKIMDKSIYNHEKNQEGIDETNKNTTHFISTIKRPLSNNNNKNSKIFCDLSSLSQAYVFYKLSQTQVINKYNLRSVLQYHGASLFPKERIRYFCGTRGIFNSQSKHKRLRNFGMNEWKNWLRDHYQYDLSQIKWSRLVLQKWRNRVNQRRTVQNKDSKKLGSYEKDQLIHYETEHDYEVYSLPSQKENLKKNYRYDLLSYNYIHYENKKGSYIHVSPLQVTKGREIPYNYNIHKPEFFYVLGGIPISDYLGEDYIIDTEENPDRKYFDWIILNFCLRKKLDIEAWTDIDTGDSINKNTKTGTNNYQIIDKIDKKYLFYLTIHQEINPSNQKKNFFDWMGMNEEILNRTISNLELWFFQEFVLLYNAYKIKPWVIPIKLLLLNFNRNKNVSENKNINKKQKNDLWIPFTEKKSIELENRNQEEKETRGQGDLGSDAQNHGNLGYVLSNQQKDVEEDYAGSNIKKRRKKKQCTSNTEAELNFLLKRYLLFQLRWDDPFNQRMINNIKVYCLLLRLINPKEISISSIQSGEMSPDIIQKDLTITELIKKGLLIIEPVRLSIKRDGQFIMYQTISISLVHKNKQQTNGRCREKRYVDKNYFDESIARHEKMVGTGDENHYELLVPENISSPRRRRELRIRICFNSGNKNFVDRNPVFFNENKVKHCGRFLDENKHLDTDKKKLIKLKCFLWPNYQLEDLACMNRYWFNTNNGSRFSMSRIHMYPRLKIR.

6 helical membrane passes run 18–38, 64–84, 87–107, 124–144, 172–192, and 221–241; these read IINS…FSIG, FITG…HLAL, PHTI…WNNH, LSIQ…HFIL, VGWL…LFWI, and IFSI…PAPI. Residues 247 to 314 are disordered; that stretch reads KETSKTEERG…TEEIRVNGKE (68 aa). Residues 256-268 show a composition bias toward acidic residues; that stretch reads GESEEERDVEIET. A compositionally biased stretch (basic and acidic residues) spans 273 to 284; the sequence is KGTKQEQERSTE. The span at 295-306 shows a compositional bias: acidic residues; it reads EKEDPDKIDETE.

This sequence belongs to the TIC214 family. Part of the Tic complex.

Its subcellular location is the plastid. The protein resides in the chloroplast inner membrane. Involved in protein precursor import into chloroplasts. May be part of an intermediate translocation complex acting as a protein-conducting channel at the inner envelope. This chain is Protein TIC 214, found in Buxus microphylla (Littleleaf boxwood).